The sequence spans 196 residues: dTTP/UTP pyrophosphatase (196 aa).

The active-site Proton acceptor is Asp76.

The protein belongs to the Maf family. YhdE subfamily. The cofactor is a divalent metal cation.

The protein resides in the cytoplasm. The catalysed reaction is dTTP + H2O = dTMP + diphosphate + H(+). It carries out the reaction UTP + H2O = UMP + diphosphate + H(+). Functionally, nucleoside triphosphate pyrophosphatase that hydrolyzes dTTP and UTP. May have a dual role in cell division arrest and in preventing the incorporation of modified nucleotides into cellular nucleic acids. The protein is dTTP/UTP pyrophosphatase of Chlorobium chlorochromatii (strain CaD3).